The sequence spans 422 residues: Glutamate-1-semialdehyde 2,1-aminomutase (422 aa).

Lys264 bears the N6-(pyridoxal phosphate)lysine mark.

It belongs to the class-III pyridoxal-phosphate-dependent aminotransferase family. HemL subfamily. As to quaternary structure, homodimer. The cofactor is pyridoxal 5'-phosphate.

The protein localises to the cytoplasm. It catalyses the reaction (S)-4-amino-5-oxopentanoate = 5-aminolevulinate. The protein operates within porphyrin-containing compound metabolism; protoporphyrin-IX biosynthesis; 5-aminolevulinate from L-glutamyl-tRNA(Glu): step 2/2. The chain is Glutamate-1-semialdehyde 2,1-aminomutase from Clostridium kluyveri (strain ATCC 8527 / DSM 555 / NBRC 12016 / NCIMB 10680 / K1).